We begin with the raw amino-acid sequence, 447 residues long: Dihydrolipoyllysine-residue acetyltransferase component of pyruvate dehydrogenase complex (447 aa).

A Lipoyl-binding domain is found at 2-78; that stretch reads PINITMPALS…KVNALIAVLA (77 aa). At lysine 43 the chain carries N6-lipoyllysine. Residues 91-140 are disordered; it reads GNGAAGAVPAPKPKETAETAPAAAPAPAAAPAPQAAAPASPAPADGEGKR. A compositionally biased stretch (low complexity) spans 108 to 134; the sequence is ETAPAAAPAPAAAPAPQAAAPASPAPA. Residues 142–179 form the Peripheral subunit-binding (PSBD) domain; it reads FSSPLARRLAKEAGIDLSAIAGSGPHGRVVKKDVETAV. Histidine 420 is an active-site residue.

This sequence belongs to the 2-oxoacid dehydrogenase family. As to quaternary structure, forms a 24-polypeptide structural core with octahedral symmetry. Requires (R)-lipoate as cofactor.

It catalyses the reaction N(6)-[(R)-dihydrolipoyl]-L-lysyl-[protein] + acetyl-CoA = N(6)-[(R)-S(8)-acetyldihydrolipoyl]-L-lysyl-[protein] + CoA. Its function is as follows. The pyruvate dehydrogenase complex catalyzes the overall conversion of pyruvate to acetyl-CoA and CO(2). It contains multiple copies of three enzymatic components: pyruvate dehydrogenase (E1), dihydrolipoamide acetyltransferase (E2) and lipoamide dehydrogenase (E3). This chain is Dihydrolipoyllysine-residue acetyltransferase component of pyruvate dehydrogenase complex (pdhC), found in Rhizobium meliloti (strain 1021) (Ensifer meliloti).